Reading from the N-terminus, the 358-residue chain is Heme A synthase (358 aa).

Transmembrane regions (helical) follow at residues 22–42, 107–127, 139–159, 173–193, 208–228, 269–289, 302–322, and 324–344; these read IQVW…VGGA, ILGR…WATK, IVPI…ASGI, AFHL…SRGF, FAGW…LVAG, FIHR…AFYV, AFFI…TLLR, and VPIG…CFSV. Residue His-271 participates in heme binding. His-332 is a heme binding site.

The protein belongs to the COX15/CtaA family. Type 2 subfamily. In terms of assembly, interacts with CtaB. Heme b serves as cofactor.

The protein resides in the cell membrane. The enzyme catalyses Fe(II)-heme o + 2 A + H2O = Fe(II)-heme a + 2 AH2. It participates in porphyrin-containing compound metabolism; heme A biosynthesis; heme A from heme O: step 1/1. In terms of biological role, catalyzes the conversion of heme O to heme A by two successive hydroxylations of the methyl group at C8. The first hydroxylation forms heme I, the second hydroxylation results in an unstable dihydroxymethyl group, which spontaneously dehydrates, resulting in the formyl group of heme A. This chain is Heme A synthase, found in Bartonella quintana (strain Toulouse) (Rochalimaea quintana).